Reading from the N-terminus, the 119-residue chain is Toxin ICK-9 (119 aa).

Positions 1–19 (MMKLYSLVIIATLAAAAFA) are cleaved as a signal peptide. Intrachain disulfides connect Cys-59-Cys-74, Cys-67-Cys-80, Cys-71-Cys-116, and Cys-73-Cys-87.

This sequence belongs to the neurotoxin 25 family. ICK-8 subfamily. Expressed by the venom gland.

It localises to the secreted. Ion channel inhibitor. This is Toxin ICK-9 from Trittame loki (Brush-footed trapdoor spider).